Reading from the N-terminus, the 275-residue chain is 2,3,4,5-tetrahydropyridine-2,6-dicarboxylate N-succinyltransferase (275 aa).

Substrate contacts are provided by arginine 106 and aspartate 143.

The protein belongs to the transferase hexapeptide repeat family. Homotrimer.

The protein localises to the cytoplasm. The catalysed reaction is (S)-2,3,4,5-tetrahydrodipicolinate + succinyl-CoA + H2O = (S)-2-succinylamino-6-oxoheptanedioate + CoA. It functions in the pathway amino-acid biosynthesis; L-lysine biosynthesis via DAP pathway; LL-2,6-diaminopimelate from (S)-tetrahydrodipicolinate (succinylase route): step 1/3. In Burkholderia pseudomallei (strain 1106a), this protein is 2,3,4,5-tetrahydropyridine-2,6-dicarboxylate N-succinyltransferase.